Here is a 378-residue protein sequence, read N- to C-terminus: Erythronate-4-phosphate dehydrogenase (378 aa).

Positions 45 and 66 each coordinate substrate. NAD(+) contacts are provided by D146 and T175. The active site involves R208. Position 232 (D232) interacts with NAD(+). E237 is an active-site residue. H254 (proton donor) is an active-site residue. G257 serves as a coordination point for NAD(+). Y258 lines the substrate pocket.

It belongs to the D-isomer specific 2-hydroxyacid dehydrogenase family. PdxB subfamily. In terms of assembly, homodimer.

Its subcellular location is the cytoplasm. It carries out the reaction 4-phospho-D-erythronate + NAD(+) = (R)-3-hydroxy-2-oxo-4-phosphooxybutanoate + NADH + H(+). The protein operates within cofactor biosynthesis; pyridoxine 5'-phosphate biosynthesis; pyridoxine 5'-phosphate from D-erythrose 4-phosphate: step 2/5. Catalyzes the oxidation of erythronate-4-phosphate to 3-hydroxy-2-oxo-4-phosphonooxybutanoate. In Salmonella agona (strain SL483), this protein is Erythronate-4-phosphate dehydrogenase.